Here is a 612-residue protein sequence, read N- to C-terminus: Peroxisomal carnitine O-octanoyltransferase (612 aa).

Position 1 is an N-acetylmethionine (M1). N6-succinyllysine occurs at positions 40 and 57. H327 serves as the catalytic Proton acceptor. CoA is bound by residues K406 and 410-417 (KEEALHPD). The residue at position 406 (K406) is an N6-acetyllysine; alternate. The residue at position 406 (K406) is an N6-succinyllysine; alternate. (R)-carnitine-binding residues include Y439, T441, and T452. Residues 610 to 612 (AHL) carry the Microbody targeting signal motif.

Belongs to the carnitine/choline acetyltransferase family.

It is found in the peroxisome. It catalyses the reaction octanoyl-CoA + (R)-carnitine = O-octanoyl-(R)-carnitine + CoA. The catalysed reaction is 4,8-dimethylnonanoyl-CoA + (R)-carnitine = O-4,8-dimethylnonanoyl-(R)-carnitine + CoA. It functions in the pathway lipid metabolism; fatty acid beta-oxidation. In terms of biological role, beta-oxidation of fatty acids. The highest activity concerns the C6 to C10 chain length substrate. The chain is Peroxisomal carnitine O-octanoyltransferase (Crot) from Mus musculus (Mouse).